A 621-amino-acid chain; its full sequence is MAPTLAPFAARWDAEADRRMALRTPEHLKALMDAQKGYNSARSTAATAKSQRTAARAASKNPLSTVRRAARTADKAARTHRDQAKTKLKAARKDYPATLRARAVQAHAMHAVPGAGISALGWDQAGAWPVAGSLALIAANVAALVIGRRKVAVAVADELSAEERRLVERLDPSYWAQHADERGLVGTVTTPVQVTPAGLVTTVRLDGRWKPSAFKAKHEEIRALLGARTDLRMEIKAGSHGDRAVITLRTRSAADGIDLTGWTPGAPWGVDTVTGEPVQVPLGRRMLIAGTSGSGKSWSTRALLAEGSEYADHRLVVVDPKRVEAINWQHRARTAISIEDVLDVTDELVEEMHERLELIPRGQDVIQISPERPRITVFIDEGAEVIAMAKKTRAKGSKEEPGDPDWSRIMENLSTLARMARAAEIILIWATQKPTMDAKGGIDPQISAQITYRAALALSTSGESRVVFGEDATEKGWHAHELPMPGVAMLRSGPKVQPHPINTRAFSPADVIALPDRPVWRRQESPARSAGASAPAPLRLVKETAPAAEVPAQPTKAPTNREKVAAAIGTGATTVADVATVTGINKGSVSKAVKQLLDAGEVLRSEDGSLSVVTQVGEVSA.

The chain crosses the membrane as a helical span at residues 126–146 (GAWPVAGSLALIAANVAALVI). Residues 275–465 (GEPVQVPLGR…LALSTSGESR (191 aa)) form the FtsK domain. 290 to 297 (GTSGSGKS) lines the ATP pocket. Residues 564 to 584 (VAAAIGTGATTVADVATVTGI) traverse the membrane as a helical segment.

The protein localises to the cell membrane. Major protein required for plasmid transfer. In Streptomyces lividans, this protein is Protein Tra (tra).